We begin with the raw amino-acid sequence, 883 residues long: Integrator complex subunit 6 (883 aa).

The region spanning 3–227 is the VWFA domain; sequence ILLFLIDTSA…QCLESLVQKV (225 aa). The short motif at 625-632 is the Inhibitory loop element; sequence MMIDEADE. The segment at 666-686 is disordered; that stretch reads RRQSPAVNSHIGGKGPPAPMT. Ser-800 bears the Phosphoserine mark.

Belongs to the Integrator subunit 6 family. Component of the Integrator complex, composed of core subunits INTS1, INTS2, INTS3, INTS4, INTS5, INTS6, INTS7, INTS8, INTS9/RC74, INTS10, INTS11/CPSF3L, INTS12, INTS13, INTS14 and INTS15. The core complex associates with protein phosphatase 2A subunits PPP2CA and PPP2R1A, to form the Integrator-PP2A (INTAC) complex.

It is found in the nucleus. The protein resides in the chromosome. In terms of biological role, component of the integrator complex, a multiprotein complex that terminates RNA polymerase II (Pol II) transcription in the promoter-proximal region of genes. The integrator complex provides a quality checkpoint during transcription elongation by driving premature transcription termination of transcripts that are unfavorably configured for transcriptional elongation: the complex terminates transcription by (1) catalyzing dephosphorylation of the C-terminal domain (CTD) of Pol II subunit POLR2A/RPB1 and SUPT5H/SPT5, (2) degrading the exiting nascent RNA transcript via endonuclease activity and (3) promoting the release of Pol II from bound DNA. The integrator complex is also involved in terminating the synthesis of non-coding Pol II transcripts, such as enhancer RNAs (eRNAs), small nuclear RNAs (snRNAs), telomerase RNAs and long non-coding RNAs (lncRNAs). Within the integrator complex, INTS6 acts as a molecular adapter that promotes assembly of protein phosphatase 2A (PP2A) subunits to the integrator core complex, promoting recruitment of PP2A to transcription pause-release checkpoint. Mediates recruitment of cytoplasmic dynein to the nuclear envelope, probably as component of the integrator complex. The polypeptide is Integrator complex subunit 6 (Ints6) (Mus musculus (Mouse)).